A 292-amino-acid chain; its full sequence is ATP synthase gamma chain (292 aa).

The protein belongs to the ATPase gamma chain family. As to quaternary structure, F-type ATPases have 2 components, CF(1) - the catalytic core - and CF(0) - the membrane proton channel. CF(1) has five subunits: alpha(3), beta(3), gamma(1), delta(1), epsilon(1). CF(0) has three main subunits: a, b and c.

The protein resides in the cell inner membrane. Produces ATP from ADP in the presence of a proton gradient across the membrane. The gamma chain is believed to be important in regulating ATPase activity and the flow of protons through the CF(0) complex. The protein is ATP synthase gamma chain of Chlorobaculum parvum (strain DSM 263 / NCIMB 8327) (Chlorobium vibrioforme subsp. thiosulfatophilum).